Here is a 158-residue protein sequence, read N- to C-terminus: HTH-type transcriptional repressor NicR (158 aa).

The region spanning 20–152 (TEQVGHLLRK…ILYLLRKMID (133 aa)) is the HTH marR-type domain. Residues 66–89 (QAELIKATAVDQATIRGIVERLKA) constitute a DNA-binding region (H-T-H motif).

It functions in the pathway cofactor degradation; nicotinate degradation [regulation]. In terms of biological role, transcriptional repressor for the nicCDEFTP and nicXR operons, encoding the lower aerobic nicotinate degradation pathway. Acts under non-induced conditions: repression of the nicCDEFTP and nicXR operons becomes alleviated in presence of 6-hydroxynicotinate (6HNA). This chain is HTH-type transcriptional repressor NicR (nicR), found in Pseudomonas putida (strain ATCC 47054 / DSM 6125 / CFBP 8728 / NCIMB 11950 / KT2440).